The sequence spans 248 residues: 2,3-bisphosphoglycerate-dependent phosphoglycerate mutase (248 aa).

Substrate-binding positions include 8-15 (RHGESTWN), 21-22 (TG), R60, 87-90 (ERHY), K98, 114-115 (RR), and 183-184 (GN). The active-site Tele-phosphohistidine intermediate is the H9. Catalysis depends on E87, which acts as the Proton donor/acceptor.

This sequence belongs to the phosphoglycerate mutase family. BPG-dependent PGAM subfamily. Homodimer.

It catalyses the reaction (2R)-2-phosphoglycerate = (2R)-3-phosphoglycerate. It functions in the pathway carbohydrate degradation; glycolysis; pyruvate from D-glyceraldehyde 3-phosphate: step 3/5. Functionally, catalyzes the interconversion of 2-phosphoglycerate and 3-phosphoglycerate. The polypeptide is 2,3-bisphosphoglycerate-dependent phosphoglycerate mutase (Burkholderia vietnamiensis (strain G4 / LMG 22486) (Burkholderia cepacia (strain R1808))).